Consider the following 309-residue polypeptide: Succinate dehydrogenase [ubiquinone] iron-sulfur subunit 3, mitochondrial (309 aa).

The transit peptide at 1–22 directs the protein to the mitochondrion; that stretch reads MSSVLRLLGRRICNPAAEKVRL. Residues 69–160 enclose the 2Fe-2S ferredoxin-type domain; it reads FKIYRWNPDK…PTIITPLPHM (92 aa). [2Fe-2S] cluster-binding residues include cysteine 120, cysteine 125, and cysteine 140. In terms of domain architecture, 4Fe-4S ferredoxin-type spans 202-232; that stretch reads DRKKLDGLYECILCACCTTSCPSYWWNPEEF. [4Fe-4S] cluster is bound by residues cysteine 212, cysteine 215, and cysteine 218. Cysteine 222 contributes to the [3Fe-4S] cluster binding site. Tryptophan 227 contributes to the a ubiquinone binding site. [3Fe-4S] cluster is bound by residues cysteine 270 and cysteine 276. Residue cysteine 280 participates in [4Fe-4S] cluster binding.

Belongs to the succinate dehydrogenase/fumarate reductase iron-sulfur protein family. Component of complex II composed of eight subunits in plants: four classical SDH subunits SDH1, SDH2, SDH3 and SDH4 (a flavoprotein (FP), an iron-sulfur protein (IP), and a cytochrome b composed of a large and a small subunit.), as well as four subunits unknown in mitochondria from bacteria and heterotrophic eukaryotes. Requires [2Fe-2S] cluster as cofactor. [3Fe-4S] cluster serves as cofactor. [4Fe-4S] cluster is required as a cofactor.

Its subcellular location is the mitochondrion inner membrane. It carries out the reaction a quinone + succinate = fumarate + a quinol. The protein operates within carbohydrate metabolism; tricarboxylic acid cycle; fumarate from succinate (eukaryal route): step 1/1. In terms of biological role, iron-sulfur protein (IP) subunit of succinate dehydrogenase (SDH) that is involved in complex II of the mitochondrial electron transport chain and is responsible for transferring electrons from succinate to ubiquinone (coenzyme Q). The sequence is that of Succinate dehydrogenase [ubiquinone] iron-sulfur subunit 3, mitochondrial (SDH2-3) from Arabidopsis thaliana (Mouse-ear cress).